A 358-amino-acid chain; its full sequence is tRNA-specific 2-thiouridylase MnmA (358 aa).

ATP is bound by residues 6–13 (ALSGGVDS) and Met-32. Cys-103 functions as the Nucleophile in the catalytic mechanism. A disulfide bond links Cys-103 and Cys-201. Gly-127 lines the ATP pocket. An interaction with tRNA region spans residues 151-153 (KDQ). Cys-201 (cysteine persulfide intermediate) is an active-site residue.

This sequence belongs to the MnmA/TRMU family.

It localises to the cytoplasm. It carries out the reaction S-sulfanyl-L-cysteinyl-[protein] + uridine(34) in tRNA + AH2 + ATP = 2-thiouridine(34) in tRNA + L-cysteinyl-[protein] + A + AMP + diphosphate + H(+). Functionally, catalyzes the 2-thiolation of uridine at the wobble position (U34) of tRNA, leading to the formation of s(2)U34. This is tRNA-specific 2-thiouridylase MnmA from Thermotoga maritima (strain ATCC 43589 / DSM 3109 / JCM 10099 / NBRC 100826 / MSB8).